We begin with the raw amino-acid sequence, 416 residues long: Pectin acetylesterase 3 (416 aa).

Residues 1-25 form the signal peptide; it reads MKSVLRIAAAIFWLWLFIVLGVIGS. An N-linked (GlcNAc...) asparagine glycan is attached at N131. Catalysis depends on charge relay system residues S198 and D294. Residue N324 is glycosylated (N-linked (GlcNAc...) asparagine). Residue H361 is the Charge relay system of the active site.

Belongs to the pectinacetylesterase family.

The protein resides in the secreted. Its subcellular location is the cell wall. Hydrolyzes acetyl esters in homogalacturonan regions of pectin. In type I primary cell wall, galacturonic acid residues of pectin can be acetylated at the O-2 and O-3 positions. Decreasing the degree of acetylation of pectin gels in vitro alters their physical properties. This Arabidopsis thaliana (Mouse-ear cress) protein is Pectin acetylesterase 3.